The sequence spans 82 residues: Delta-ctenitoxin-Pn2a (82 aa).

The N-terminal stretch at 1 to 17 (MKVAILFLSILVLAVAS) is a signal peptide. A propeptide spanning residues 18-34 (ESIEESRDDFAVEELGR) is cleaved from the precursor. 5 disulfide bridges follow: Cys-37/Cys-51, Cys-44/Cys-57, Cys-48/Cys-80, Cys-50/Cys-65, and Cys-59/Cys-63.

This sequence belongs to the neurotoxin 03 (Tx2) family. 06 subfamily. As to expression, expressed by the venom gland.

The protein localises to the secreted. Its function is as follows. Toxin that is known to potentiate erectile function. It binds voltage-dependently to sodium channels (Nav), inhibits the inactivation of the activated channels and decreases the peak inward current. The toxin delays inactivation of Nav1.2/SCN2A, Nav1.3/SCN3A, Nav1.4/SCN4A and Nav1.8/SCN10A, slows the inactivation process and decreases the sodium peak amplitude of Nav1.5/SCN5A and Nav1.6/SCN8A. In vivo, it enhances erectile function by inducing the release of nictric oxide (NO): it slows the sodium current, leading to depolarization, which leads to an increase in calcium influx (probably via activation of N-type calcium channels) which in turn activates neuronal NO synthase (nNOS/NOS1), inducing nitric oxide (NO) production. In a final step, NO activates soluble guanylate cyclase (GUCY1A1/GUCY1B1) which in turn increases cGMP formation, resulting in penile erection. It is noteworthy that the toxin does not provoke erection by inhibiting phosphodiesterase type 5 (PDE5A), an enzyme that hydrolysis cGMP. In vivo, it also causes scratching, lacrimation, hypersalivation, sweating and agitation followed by spastic paralysis of the anterior and posterior extremities and death at dose levels of 0.79 mg/mouse. It is insecticidal to the larval and adult forms of the house fly. The toxin also improves cavernosal relaxation in different models where erectile dysfunction is observed, such as deoxycorticosterone-acetate (DOCA)-salt hypertensive rats, mice models for type-1 diabetes, as well as elderly rats. The sequence is that of Delta-ctenitoxin-Pn2a from Phoneutria nigriventer (Brazilian armed spider).